The following is a 244-amino-acid chain: 7-cyano-7-deazaguanine synthase (244 aa).

Residue 14–24 (FSGGQDSATCV) participates in ATP binding. Zn(2+)-binding residues include cysteine 202, cysteine 217, cysteine 220, and cysteine 223.

This sequence belongs to the QueC family. It depends on Zn(2+) as a cofactor.

The enzyme catalyses 7-carboxy-7-deazaguanine + NH4(+) + ATP = 7-cyano-7-deazaguanine + ADP + phosphate + H2O + H(+). The protein operates within purine metabolism; 7-cyano-7-deazaguanine biosynthesis. In terms of biological role, catalyzes the ATP-dependent conversion of 7-carboxy-7-deazaguanine (CDG) to 7-cyano-7-deazaguanine (preQ(0)). This chain is 7-cyano-7-deazaguanine synthase, found in Burkholderia lata (strain ATCC 17760 / DSM 23089 / LMG 22485 / NCIMB 9086 / R18194 / 383).